A 355-amino-acid chain; its full sequence is tRNA uridine(34) hydroxylase (355 aa).

The region spanning 146 to 240 (KDPDALFVDM…YVRTAKKKDL (95 aa)) is the Rhodanese domain. Residue Cys200 is the Cysteine persulfide intermediate of the active site.

The protein belongs to the TrhO family.

The enzyme catalyses uridine(34) in tRNA + AH2 + O2 = 5-hydroxyuridine(34) in tRNA + A + H2O. Catalyzes oxygen-dependent 5-hydroxyuridine (ho5U) modification at position 34 in tRNAs. In Hamiltonella defensa subsp. Acyrthosiphon pisum (strain 5AT), this protein is tRNA uridine(34) hydroxylase.